A 139-amino-acid polypeptide reads, in one-letter code: D-ribose pyranase (139 aa).

The active-site Proton donor is the histidine 20. Substrate is bound by residues aspartate 28, histidine 106, and 128 to 130 (YAN).

This sequence belongs to the RbsD / FucU family. RbsD subfamily. Homodecamer.

It localises to the cytoplasm. The catalysed reaction is beta-D-ribopyranose = beta-D-ribofuranose. Its pathway is carbohydrate metabolism; D-ribose degradation; D-ribose 5-phosphate from beta-D-ribopyranose: step 1/2. Catalyzes the interconversion of beta-pyran and beta-furan forms of D-ribose. This Actinobacillus pleuropneumoniae serotype 5b (strain L20) protein is D-ribose pyranase.